The chain runs to 73 residues: Translation initiation factor IF-1 (73 aa).

The S1-like domain maps to 1–73 (MSEKEAGIEV…TRGRITYRDK (73 aa)).

The protein belongs to the IF-1 family. Component of the 30S ribosomal translation pre-initiation complex which assembles on the 30S ribosome in the order IF-2 and IF-3, IF-1 and N-formylmethionyl-tRNA(fMet); mRNA recruitment can occur at any time during PIC assembly.

It is found in the cytoplasm. One of the essential components for the initiation of protein synthesis. Stabilizes the binding of IF-2 and IF-3 on the 30S subunit to which N-formylmethionyl-tRNA(fMet) subsequently binds. Helps modulate mRNA selection, yielding the 30S pre-initiation complex (PIC). Upon addition of the 50S ribosomal subunit IF-1, IF-2 and IF-3 are released leaving the mature 70S translation initiation complex. This is Translation initiation factor IF-1 from Anaeromyxobacter sp. (strain Fw109-5).